Reading from the N-terminus, the 158-residue chain is RING-H2 finger protein ATL66 (158 aa).

A helical membrane pass occupies residues 33–53 (LFFALALFSVVLFFALLTLYI). The RING-type; atypical zinc finger occupies 107–149 (CCICLGGFEEGEKMKVLPPCSHCYHCECVDRWLKTESSCPLCR).

The protein belongs to the RING-type zinc finger family. ATL subfamily.

It is found in the membrane. It catalyses the reaction S-ubiquitinyl-[E2 ubiquitin-conjugating enzyme]-L-cysteine + [acceptor protein]-L-lysine = [E2 ubiquitin-conjugating enzyme]-L-cysteine + N(6)-ubiquitinyl-[acceptor protein]-L-lysine.. Its pathway is protein modification; protein ubiquitination. This Arabidopsis thaliana (Mouse-ear cress) protein is RING-H2 finger protein ATL66 (ATL66).